The sequence spans 274 residues: Undecaprenyl-diphosphatase 2 (274 aa).

A run of 6 helical transmembrane segments spans residues 47 to 64 (VFVIVIQLGAILAVCWEY), 82 to 102 (WKFVTNLLIAFLPAVVLGLTF), 110 to 130 (LFSPVPVATAFIVGGLVILWA), 185 to 205 (ATEFSFFLAIPTLTAASLYDL), 219 to 239 (LMAVGFVVSFLSALVAVRGLI), and 249 to 269 (VFAWYRIAFGLVVLATAWSGL).

This sequence belongs to the UppP family.

The protein resides in the cell inner membrane. It catalyses the reaction di-trans,octa-cis-undecaprenyl diphosphate + H2O = di-trans,octa-cis-undecaprenyl phosphate + phosphate + H(+). Catalyzes the dephosphorylation of undecaprenyl diphosphate (UPP). Confers resistance to bacitracin. The protein is Undecaprenyl-diphosphatase 2 of Rhodospirillum rubrum (strain ATCC 11170 / ATH 1.1.1 / DSM 467 / LMG 4362 / NCIMB 8255 / S1).